Consider the following 490-residue polypeptide: Protein twist (490 aa).

Disordered regions lie at residues 48–74 (QLQH…QHTQ), 98–167 (PSNE…TGGS), and 330–359 (LDGS…ETDE). Basic residues predominate over residues 54 to 64 (QHLHSHQHHQQ). Composition is skewed to low complexity over residues 65–74 (HQQQQQQHTQ) and 104–135 (STSS…NNPS). Residues 339 to 351 (AFRKPRRRLKRKP) show a composition bias toward basic residues. Positions 362–413 (NQRVMANVRERQRTQSLNDAFKSLQQIIPTLPSDKLSKIQTLKLATRYIDFL) constitute a bHLH domain.

In terms of assembly, efficient DNA binding requires dimerization with another bHLH protein. Homodimer.

Its subcellular location is the nucleus. Functionally, involved in the establishment and dorsoventral patterning of germ layers in the embryo. The protein is Protein twist of Drosophila erecta (Fruit fly).